The sequence spans 112 residues: Putative regulatory protein FmdB (112 aa).

The segment covering 52–68 has biased composition (basic and acidic residues); the sequence is QRSAHERNEKSANEPRT. Residues 52–112 are disordered; the sequence is QRSAHERNEK…KTARPWMVGH (61 aa). Polar residues predominate over residues 74–102; sequence CGCTGSHTCKTKPPVNQDTGKPGLQMQTK.

The protein resides in the cytoplasm. Its function is as follows. May be a positive regulator of formamidase. This Methylophilus methylotrophus (Bacterium W3A1) protein is Putative regulatory protein FmdB (fmdB).